The primary structure comprises 494 residues: uncharacterized protein (494 aa).

The 79-residue stretch at phenylalanine 4–phenylalanine 82 folds into the 2Fe-2S ferredoxin-type domain. Cysteine 46, cysteine 51, cysteine 54, and cysteine 66 together coordinate [2Fe-2S] cluster. 4Fe-4S ferredoxin-type domains follow at residues aspartate 127–glycine 157 and glutamate 178–asparagine 208. 8 residues coordinate [4Fe-4S] cluster: cysteine 137, cysteine 140, cysteine 143, cysteine 147, cysteine 189, cysteine 192, cysteine 195, and cysteine 199.

Belongs to the succinate dehydrogenase/fumarate reductase iron-sulfur protein family.

This is an uncharacterized protein from Methanococcus maripaludis (strain DSM 14266 / JCM 13030 / NBRC 101832 / S2 / LL).